Reading from the N-terminus, the 497-residue chain is PHD finger protein 10 (497 aa).

The tract at residues 1–61 (MAAAGPGAAL…SSRSCETSSQ (61 aa)) is disordered. Phosphoserine is present on residues S11, S35, and S49. Positions 88-184 (MLQEQVSEYL…HYKEYSQMQQ (97 aa)) are essential to induce neural progenitor proliferation. Residues 88–294 (MLQEQVSEYL…PPLDPELPAL (207 aa)) form an SAY region. K240 is covalently cross-linked (Glycyl lysine isopeptide (Lys-Gly) (interchain with G-Cter in SUMO2)). S269 bears the Phosphoserine mark. Low complexity predominate over residues 284 to 295 (EPPLDPELPALD). The interval 284 to 367 (EPPLDPELPA…KRSVLSKSVP (84 aa)) is disordered. The interval 291–333 (LPALDSDGDSDDGEDGGGDEKRKNKGTSDSSSGNVSEGDSPPD) is essential to induce neural progenitor proliferation. Phosphoserine is present on residues S296, S300, S326, and S330. Acidic residues predominate over residues 296–307 (SDGDSDDGEDGG). Residues 317-327 (TSDSSSGNVSE) are compositionally biased toward polar residues. Basic and acidic residues predominate over residues 344-358 (KSKDKMATPRKDGSK). A PHD-type 1; degenerate zinc finger spans residues 378 to 435 (LCGICLKGKESNKKGKAESLIHCSQCDNSGHPSCLDMTMELVSMIKTYPWQCMECKTC). A Glycyl lysine isopeptide (Lys-Gly) (interchain with G-Cter in SUMO2) cross-link involves residue K384. The segment at 437-480 (ICGQPHHEEEMMFCDVCDRGYHTFCVGLGAIPSGRWICDCCQRA) adopts a PHD-type 2; degenerate zinc-finger fold.

This sequence belongs to the SAYP family. As to quaternary structure, component of neural progenitors-specific chromatin remodeling complex (npBAF complex) composed of at least, ARID1A/BAF250A or ARID1B/BAF250B, SMARCD1/BAF60A, SMARCD3/BAF60C, SMARCA2/BRM/BAF190B, SMARCA4/BRG1/BAF190A, SMARCB1/BAF47, SMARCC1/BAF155, SMARCE1/BAF57, SMARCC2/BAF170, PHF10/BAF45A, ACTL6A/BAF53A and actin. Interacts with ACTL6A/BAF53A, SMARCA2/BRM/BAF190B, SMARCA4/BRG1/BAF190A and PBRM1/BAF180.

Its subcellular location is the nucleus. In terms of biological role, involved in transcription activity regulation by chromatin remodeling. Belongs to the neural progenitors-specific chromatin remodeling complex (npBAF complex) and is required for the proliferation of neural progenitors. During neural development a switch from a stem/progenitor to a post-mitotic chromatin remodeling mechanism occurs as neurons exit the cell cycle and become committed to their adult state. The transition from proliferating neural stem/progenitor cells to post-mitotic neurons requires a switch in subunit composition of the npBAF and nBAF complexes. As neural progenitors exit mitosis and differentiate into neurons, npBAF complexes which contain ACTL6A/BAF53A and PHF10/BAF45A, are exchanged for homologous alternative ACTL6B/BAF53B and DPF1/BAF45B or DPF3/BAF45C subunits in neuron-specific complexes (nBAF). The npBAF complex is essential for the self-renewal/proliferative capacity of the multipotent neural stem cells. The nBAF complex along with CREST plays a role regulating the activity of genes essential for dendrite growth. The chain is PHD finger protein 10 (Phf10) from Rattus norvegicus (Rat).